The chain runs to 147 residues: uncharacterized protein (147 aa).

This is an uncharacterized protein from Caenorhabditis elegans.